The chain runs to 328 residues: MSIYLRWSLEHGKSNSNSNGIINQQDERFNIFKDNLRFIDLHNENNKNATYKLGLTIFANLTNDEYRSLYLGARTEPVRRITKAKNVNMKYSAAVNVDEVPVTVDWRQKGAVNAIKDQGTCGSCWAFSTAAAVEGINKIVTGELVSLSEQELVDCDKSYNQGCNGGLMDYAFQFIMKNGGLNTEKDYPYHGTNGKCNSLLKNSRVVTIDGYEDVPSKDETALKRAVSYQPVSVAIDAGGRAFQHYQSGIFTGKCGTNMDHAVVAVGYGSENGVDYWIVRNSWGTRWGEDGYIRMERNVASKSGKCGIAIEASYPVKYSPNPVRGTSSV.

Positions Met1–Glu99 are cleaved as a propeptide — activation peptide. 2 N-linked (GlcNAc...) asparagine glycosylation sites follow: Asn48 and Asn60. Intrachain disulfides connect Cys121–Cys163, Cys155–Cys196, and Cys254–Cys305. Cys124 is an active-site residue. Residues His260 and Asn280 contribute to the active site.

Belongs to the peptidase C1 family. As to expression, present in both cotyledons and axes.

Functionally, may function in an early event in cortical cell differentiation. This chain is Cysteine proteinase COT44, found in Brassica napus (Rape).